Reading from the N-terminus, the 668-residue chain is Lebercilin-like protein (668 aa).

A disordered region spans residues 17 to 44 (SVALENNRRSAECKRSPGTGDFSRNSSA). A compositionally biased stretch (basic and acidic residues) spans 22 to 31 (NNRRSAECKR). Coiled-coil stretches lie at residues 148 to 259 (LHKI…EREE) and 305 to 336 (AAQT…IKNI). The interval 351 to 402 (YPKVSSTKSVQADRKSLPFTSMRHQGTQKSDVPPLTTKGKKATGNMNHKEKS) is disordered. A compositionally biased stretch (polar residues) spans 368–380 (PFTSMRHQGTQKS). Positions 420–440 (EDSKTKYEDLSREEKHLEVQV) form a coiled coil. 3 disordered regions span residues 495–520 (RSMQ…PLRQ), 533–581 (LHHG…FGKS), and 605–668 (SGYV…KIII). Polar residues predominate over residues 546–558 (AGNTKYSHSTSKH). Composition is skewed to basic and acidic residues over residues 560 to 572 (SNRE…HSDS) and 621 to 632 (GSEEPLQSKESH). Residues 633–660 (PPSQASASNAFGDSKVTVVNSIKPSSPT) are compositionally biased toward polar residues.

This sequence belongs to the LCA5 family.

The polypeptide is Lebercilin-like protein (Macaca fascicularis (Crab-eating macaque)).